Consider the following 496-residue polypeptide: 3-octaprenyl-4-hydroxybenzoate carboxy-lyase (496 aa).

Mn(2+) is bound at residue N181. Residues I184–R186, R198–L200, and R203–G204 contribute to the prenylated FMN site. E247 serves as a coordination point for Mn(2+). Catalysis depends on D296, which acts as the Proton donor.

This sequence belongs to the UbiD family. Homohexamer. Prenylated FMN serves as cofactor. Mn(2+) is required as a cofactor.

The protein resides in the cell membrane. The catalysed reaction is a 4-hydroxy-3-(all-trans-polyprenyl)benzoate + H(+) = a 2-(all-trans-polyprenyl)phenol + CO2. The protein operates within cofactor biosynthesis; ubiquinone biosynthesis. In terms of biological role, catalyzes the decarboxylation of 3-octaprenyl-4-hydroxy benzoate to 2-octaprenylphenol, an intermediate step in ubiquinone biosynthesis. This chain is 3-octaprenyl-4-hydroxybenzoate carboxy-lyase, found in Aromatoleum aromaticum (strain DSM 19018 / LMG 30748 / EbN1) (Azoarcus sp. (strain EbN1)).